A 597-amino-acid polypeptide reads, in one-letter code: Kelch-like protein 21 (597 aa).

The 69-residue stretch at 35–103 (LDVTLEAAGG…SYTGRVAVSG (69 aa)) folds into the BTB domain. Positions 138–239 (CLDMQDFAEA…RRFYLLAHVE (102 aa)) constitute a BACK domain. Kelch repeat units follow at residues 287-335 (ILVL…ALGN), 336-382 (DIYV…VLDG), 384-422 (LYVVAADSTERYDHATDSWEALQPMTYPMDNCSTTACRG), 423-470 (RLYA…TLNG), 472-512 (MYFV…VLGG), and 513-560 (KLYV…SIFR). The disordered stretch occupies residues 570 to 597 (GRGFELNSGSNDVDAGYHRLPQNPEELH).

As to quaternary structure, component of the BCR(KLHL21) E3 ubiquitin ligase complex, at least composed of CUL3, KLHL21 and RBX1.

It is found in the cytoplasm. The protein localises to the cytoskeleton. Its subcellular location is the spindle. It participates in protein modification; protein ubiquitination. Functionally, substrate-specific adapter of a BCR (BTB-CUL3-RBX1) E3 ubiquitin-protein ligase complex required for efficient chromosome alignment and cytokinesis. The BCR(KLHL21) E3 ubiquitin ligase complex regulates localization of the chromosomal passenger complex (CPC) from chromosomes to the spindle midzone in anaphase and mediates the ubiquitination of AURKB. Ubiquitination of AURKB by BCR(KLHL21) E3 ubiquitin ligase complex may not lead to its degradation by the proteasome. In Mus musculus (Mouse), this protein is Kelch-like protein 21 (Klhl21).